A 142-amino-acid polypeptide reads, in one-letter code: Putative 2'-deoxynucleoside 5'-phosphate N-hydrolase 1 (142 aa).

Substrate is bound by residues 4-10 (FFSGSIR), tyrosine 19, histidine 36, glutamate 82, and 106-108 (SAM).

It belongs to the 2'-deoxynucleoside 5'-phosphate N-hydrolase 1 family. Monomer and homodimer.

The enzyme catalyses a pyrimidine 2'-deoxyribonucleoside 5'-phosphate + H2O = a pyrimidine nucleobase + 2-deoxy-D-ribose 5-phosphate. It carries out the reaction a purine 2'-deoxyribonucleoside 5'-phosphate + H2O = a purine nucleobase + 2-deoxy-D-ribose 5-phosphate. Functionally, catalyzes the cleavage of the N-glycosidic bond of deoxyribonucleoside 5'-monophosphates to yield deoxyribose 5-phosphate and a purine or pyrimidine base. This Syntrophotalea carbinolica (strain DSM 2380 / NBRC 103641 / GraBd1) (Pelobacter carbinolicus) protein is Putative 2'-deoxynucleoside 5'-phosphate N-hydrolase 1.